We begin with the raw amino-acid sequence, 199 residues long: uncharacterized protein (199 aa).

The protein resides in the mitochondrion. This is an uncharacterized protein from Schizosaccharomyces pombe (strain 972 / ATCC 24843) (Fission yeast).